The primary structure comprises 510 residues: Sphingolipid C9-methyltransferase B (510 aa).

Asn-55 carries N-linked (GlcNAc...) asparagine glycosylation. Transmembrane regions (helical) follow at residues 62–82 (LLGG…GGGA) and 84–104 (TFVF…WTYA). An N-linked (GlcNAc...) asparagine glycan is attached at Asn-175. S-adenosyl-L-methionine is bound by residues 227 to 228 (YT), 264 to 272 (MLDIGCGWG), 290 to 295 (TIAENQ), and 320 to 321 (YR). Asn-294 carries N-linked (GlcNAc...) asparagine glycosylation.

Belongs to the CFA/CMAS family.

The protein resides in the membrane. The enzyme catalyses a (4E,8E)-4-sphinga-4,8-dienine ceramide + S-adenosyl-L-methionine = a 9-methyl-(4E,8E)-sphinga-4,8-dienine ceramide + S-adenosyl-L-homocysteine + H(+). It participates in lipid metabolism; sphingolipid metabolism. Catalyzes methylation of the sphingoid base component of glucosylceramides (GluCers) at the C9-position. Sphingolipid C9-methylation requires 4,8-desaturated ceramides as substrates. Glucosylceramides play important roles in growth, differentiation and pathogenicity. The methyl group at the C9-position distinguishes fungal glucosylceramides from those of plants and animals and may thus play a role in host-pathogen interactions enabling the host to recognize the fungal attack and initiate specific defense responses. This Emericella nidulans (strain FGSC A4 / ATCC 38163 / CBS 112.46 / NRRL 194 / M139) (Aspergillus nidulans) protein is Sphingolipid C9-methyltransferase B.